The primary structure comprises 269 residues: MERYDNAFTELKARKEGAFVPFVTLGDPGPEQSLKIIDTLIAAGADALELGIPFSDPLADGPTIQSATLRAFASGVTPTQCFEMLATVRQKYPTIPIGLLMYANLVFNRGIDEFYAECARVGVDSVLIADVPIEESAPFRQAAMRHNIAPIFICPPNADDELLRQIASHGRGYTYLLSRAGVTGAENKAAVPLHHLVEKLAEYHAAPPLQGFGISSPEQVTAAIEANAAGAISGSAIVKIIEKNVDKPDQMLTELRDFVTVMKAATRHA.

Catalysis depends on proton acceptor residues Glu49 and Asp60.

Belongs to the TrpA family. Tetramer of two alpha and two beta chains.

It carries out the reaction (1S,2R)-1-C-(indol-3-yl)glycerol 3-phosphate + L-serine = D-glyceraldehyde 3-phosphate + L-tryptophan + H2O. It functions in the pathway amino-acid biosynthesis; L-tryptophan biosynthesis; L-tryptophan from chorismate: step 5/5. Functionally, the alpha subunit is responsible for the aldol cleavage of indoleglycerol phosphate to indole and glyceraldehyde 3-phosphate. This is Tryptophan synthase alpha chain from Enterobacter sp. (strain 638).